A 226-amino-acid polypeptide reads, in one-letter code: 6-carboxyhexanoate--CoA ligase (226 aa).

It belongs to the BioW family. Homodimer. Mg(2+) is required as a cofactor.

It carries out the reaction heptanedioate + ATP + CoA = 6-carboxyhexanoyl-CoA + AMP + diphosphate. It participates in metabolic intermediate metabolism; pimeloyl-CoA biosynthesis; pimeloyl-CoA from pimelate: step 1/1. In terms of biological role, catalyzes the transformation of pimelate into pimeloyl-CoA with concomitant hydrolysis of ATP to AMP. In Methanocaldococcus infernus (strain DSM 11812 / JCM 15783 / ME), this protein is 6-carboxyhexanoate--CoA ligase.